Consider the following 489-residue polypeptide: Glutamyl-tRNA(Gln) amidotransferase subunit A (489 aa).

Catalysis depends on charge relay system residues K79 and S158. The active-site Acyl-ester intermediate is S182.

The protein belongs to the amidase family. GatA subfamily. Heterotrimer of A, B and C subunits.

It catalyses the reaction L-glutamyl-tRNA(Gln) + L-glutamine + ATP + H2O = L-glutaminyl-tRNA(Gln) + L-glutamate + ADP + phosphate + H(+). Allows the formation of correctly charged Gln-tRNA(Gln) through the transamidation of misacylated Glu-tRNA(Gln) in organisms which lack glutaminyl-tRNA synthetase. The reaction takes place in the presence of glutamine and ATP through an activated gamma-phospho-Glu-tRNA(Gln). This chain is Glutamyl-tRNA(Gln) amidotransferase subunit A, found in Anaplasma marginale (strain Florida).